Consider the following 502-residue polypeptide: ATP synthase subunit alpha (502 aa).

169 to 176 lines the ATP pocket; that stretch reads GDRQTGKT.

It belongs to the ATPase alpha/beta chains family. As to quaternary structure, F-type ATPases have 2 components, CF(1) - the catalytic core - and CF(0) - the membrane proton channel. CF(1) has five subunits: alpha(3), beta(3), gamma(1), delta(1), epsilon(1). CF(0) has three main subunits: a(1), b(2) and c(9-12). The alpha and beta chains form an alternating ring which encloses part of the gamma chain. CF(1) is attached to CF(0) by a central stalk formed by the gamma and epsilon chains, while a peripheral stalk is formed by the delta and b chains.

Its subcellular location is the cell inner membrane. The catalysed reaction is ATP + H2O + 4 H(+)(in) = ADP + phosphate + 5 H(+)(out). Its function is as follows. Produces ATP from ADP in the presence of a proton gradient across the membrane. The alpha chain is a regulatory subunit. The chain is ATP synthase subunit alpha from Trichlorobacter lovleyi (strain ATCC BAA-1151 / DSM 17278 / SZ) (Geobacter lovleyi).